We begin with the raw amino-acid sequence, 141 residues long: Hemoglobin subunit alpha (141 aa).

The region spanning valine 1–arginine 141 is the Globin domain. At serine 3 the chain carries Phosphoserine. Lysine 7 and lysine 11 each carry N6-succinyllysine. Lysine 16 is modified (N6-acetyllysine; alternate). Position 16 is an N6-succinyllysine; alternate (lysine 16). Position 40 is an N6-succinyllysine (lysine 40). Serine 49 is subject to Phosphoserine. Histidine 58 provides a ligand contact to O2. Histidine 87 provides a ligand contact to heme b. Serine 102 carries the phosphoserine modification. At threonine 108 the chain carries Phosphothreonine. A Phosphoserine modification is found at serine 124. Residues threonine 134 and threonine 137 each carry the phosphothreonine modification. Serine 138 carries the post-translational modification Phosphoserine.

It belongs to the globin family. As to quaternary structure, heterotetramer of two alpha chains and two beta chains. Red blood cells.

Functionally, involved in oxygen transport from the lung to the various peripheral tissues. Hemopressin acts as an antagonist peptide of the cannabinoid receptor CNR1. Hemopressin-binding efficiently blocks cannabinoid receptor CNR1 and subsequent signaling. This Sus scrofa (Pig) protein is Hemoglobin subunit alpha (HBA).